The following is a 168-amino-acid chain: Crossover junction endodeoxyribonuclease RuvC (168 aa).

Active-site residues include aspartate 7, glutamate 64, and aspartate 136. 3 residues coordinate Mg(2+): aspartate 7, glutamate 64, and aspartate 136.

The protein belongs to the RuvC family. Homodimer which binds Holliday junction (HJ) DNA. The HJ becomes 2-fold symmetrical on binding to RuvC with unstacked arms; it has a different conformation from HJ DNA in complex with RuvA. In the full resolvosome a probable DNA-RuvA(4)-RuvB(12)-RuvC(2) complex forms which resolves the HJ. Mg(2+) is required as a cofactor.

It localises to the cytoplasm. It carries out the reaction Endonucleolytic cleavage at a junction such as a reciprocal single-stranded crossover between two homologous DNA duplexes (Holliday junction).. Its function is as follows. The RuvA-RuvB-RuvC complex processes Holliday junction (HJ) DNA during genetic recombination and DNA repair. Endonuclease that resolves HJ intermediates. Cleaves cruciform DNA by making single-stranded nicks across the HJ at symmetrical positions within the homologous arms, yielding a 5'-phosphate and a 3'-hydroxyl group; requires a central core of homology in the junction. The consensus cleavage sequence is 5'-(A/T)TT(C/G)-3'. Cleavage occurs on the 3'-side of the TT dinucleotide at the point of strand exchange. HJ branch migration catalyzed by RuvA-RuvB allows RuvC to scan DNA until it finds its consensus sequence, where it cleaves and resolves the cruciform DNA. This Polynucleobacter necessarius subsp. necessarius (strain STIR1) protein is Crossover junction endodeoxyribonuclease RuvC.